Reading from the N-terminus, the 178-residue chain is Cytochrome b6-f complex iron-sulfur subunit (178 aa).

The chain crosses the membrane as a helical span at residues 20–42; sequence LLTFGTVTGVALGALYPVAQYFT. One can recognise a Rieske domain in the interval 71–161; it reads THPVGDRSLV…VSIEDDQVLV (91 aa). The [2Fe-2S] cluster site is built by Cys107, His109, Cys125, and His128. A disulfide bridge connects residues Cys112 and Cys127.

It belongs to the Rieske iron-sulfur protein family. The 4 large subunits of the cytochrome b6-f complex are cytochrome b6, subunit IV (17 kDa polypeptide, PetD), cytochrome f and the Rieske protein, while the 4 small subunits are PetG, PetL, PetM and PetN. The complex functions as a dimer. Requires [2Fe-2S] cluster as cofactor.

Its subcellular location is the cellular thylakoid membrane. It carries out the reaction 2 oxidized [plastocyanin] + a plastoquinol + 2 H(+)(in) = 2 reduced [plastocyanin] + a plastoquinone + 4 H(+)(out). In terms of biological role, component of the cytochrome b6-f complex, which mediates electron transfer between photosystem II (PSII) and photosystem I (PSI), cyclic electron flow around PSI, and state transitions. The protein is Cytochrome b6-f complex iron-sulfur subunit of Prochlorococcus marinus (strain NATL1A).